The primary structure comprises 1380 residues: DNA-directed RNA polymerase subunit beta (1380 aa).

The protein belongs to the RNA polymerase beta chain family. As to quaternary structure, the RNAP catalytic core consists of 2 alpha, 1 beta, 1 beta' and 1 omega subunit. When a sigma factor is associated with the core the holoenzyme is formed, which can initiate transcription.

It carries out the reaction RNA(n) + a ribonucleoside 5'-triphosphate = RNA(n+1) + diphosphate. Its function is as follows. DNA-dependent RNA polymerase catalyzes the transcription of DNA into RNA using the four ribonucleoside triphosphates as substrates. This chain is DNA-directed RNA polymerase subunit beta, found in Sinorhizobium medicae (strain WSM419) (Ensifer medicae).